Consider the following 405-residue polypeptide: Glucan 1,3-beta-glucosidase A (405 aa).

Residues 1–14 (MLPLLLCIVPYCWS) form the signal peptide. Catalysis depends on glutamate 199, which acts as the Proton donor. 2 disulfides stabilise this stretch: cysteine 280–cysteine 405 and cysteine 306–cysteine 332. Glutamate 298 (nucleophile) is an active-site residue.

This sequence belongs to the glycosyl hydrolase 5 (cellulase A) family. Monomer. The cofactor is Mn(2+).

The protein resides in the secreted. The enzyme catalyses Successive hydrolysis of beta-D-glucose units from the non-reducing ends of (1-&gt;3)-beta-D-glucans, releasing alpha-glucose.. In terms of biological role, beta-glucanases participate in the metabolism of beta-glucan, the main structural component of the cell wall. It could also function biosynthetically as a transglycosylase. The sequence is that of Glucan 1,3-beta-glucosidase A (exgA) from Aspergillus oryzae (strain ATCC 42149 / RIB 40) (Yellow koji mold).